A 74-amino-acid polypeptide reads, in one-letter code: Putative membrane protein insertion efficiency factor (74 aa).

The protein belongs to the UPF0161 family.

Its subcellular location is the cell membrane. Could be involved in insertion of integral membrane proteins into the membrane. This chain is Putative membrane protein insertion efficiency factor, found in Bacillus pumilus (strain SAFR-032).